Reading from the N-terminus, the 404-residue chain is Cysteine desulfurase IscS (404 aa).

Residues 75–76 (AT), Asn-155, Gln-183, and 203–205 (SGH) contribute to the pyridoxal 5'-phosphate site. At Lys-206 the chain carries N6-(pyridoxal phosphate)lysine. A pyridoxal 5'-phosphate-binding site is contributed by Thr-243. Cys-328 functions as the Cysteine persulfide intermediate in the catalytic mechanism. Residue Cys-328 coordinates [2Fe-2S] cluster.

This sequence belongs to the class-V pyridoxal-phosphate-dependent aminotransferase family. NifS/IscS subfamily. As to quaternary structure, homodimer. Forms a heterotetramer with IscU, interacts with other sulfur acceptors. The cofactor is pyridoxal 5'-phosphate.

It localises to the cytoplasm. The catalysed reaction is (sulfur carrier)-H + L-cysteine = (sulfur carrier)-SH + L-alanine. It participates in cofactor biosynthesis; iron-sulfur cluster biosynthesis. Its function is as follows. Master enzyme that delivers sulfur to a number of partners involved in Fe-S cluster assembly, tRNA modification or cofactor biosynthesis. Catalyzes the removal of elemental sulfur atoms from cysteine to produce alanine. Functions as a sulfur delivery protein for Fe-S cluster synthesis onto IscU, an Fe-S scaffold assembly protein, as well as other S acceptor proteins. The protein is Cysteine desulfurase IscS of Shewanella baltica (strain OS223).